The sequence spans 109 residues: UPF0122 protein CLL_A1244 (109 aa).

It belongs to the UPF0122 family.

Might take part in the signal recognition particle (SRP) pathway. This is inferred from the conservation of its genetic proximity to ftsY/ffh. May be a regulatory protein. This chain is UPF0122 protein CLL_A1244, found in Clostridium botulinum (strain Eklund 17B / Type B).